The primary structure comprises 357 residues: Protein Wnt-5b (357 aa).

The first 18 residues, 1 to 18, serve as a signal peptide directing secretion; that stretch reads MPGIRLLLAAALLCCPPP. C81 and C92 are disulfide-bonded. N-linked (GlcNAc...) asparagine glycosylation is found at N91 and N97. 10 cysteine pairs are disulfide-bonded: C131–C139, C141–C159, C215–C229, C217–C224, C286–C317, C302–C312, C316–C356, C332–C347, C334–C344, and C339–C340. S221 carries the O-palmitoleoyl serine; by PORCN lipid modification. N-linked (GlcNAc...) asparagine glycosylation is found at N289 and N303.

This sequence belongs to the Wnt family. Palmitoleoylation is required for efficient binding to frizzled receptors. Depalmitoleoylation leads to Wnt signaling pathway inhibition. As to expression, predominantly in neuroectodermal tissues.

Its subcellular location is the secreted. It is found in the extracellular space. The protein resides in the extracellular matrix. Functionally, ligand for members of the frizzled family of seven transmembrane receptors. Probable developmental protein. May be a signaling molecule which affects the development of discrete regions of tissues. Is likely to signal over only few cell diameters. This is Protein Wnt-5b (WNT-5B) from Ambystoma mexicanum (Axolotl).